We begin with the raw amino-acid sequence, 92 residues long: Large ribosomal subunit protein eL43 (92 aa).

The C4-type zinc finger occupies 39–60 (CQFCGKDAMKRQAVGIWGCKSC).

It belongs to the eukaryotic ribosomal protein eL43 family.

In Cryptochiton stelleri (Giant gumboot chiton), this protein is Large ribosomal subunit protein eL43 (RPL37A).